Here is a 208-residue protein sequence, read N- to C-terminus: Protein-L-isoaspartate O-methyltransferase (208 aa).

The active site involves Ser59.

This sequence belongs to the methyltransferase superfamily. L-isoaspartyl/D-aspartyl protein methyltransferase family.

It localises to the cytoplasm. It carries out the reaction [protein]-L-isoaspartate + S-adenosyl-L-methionine = [protein]-L-isoaspartate alpha-methyl ester + S-adenosyl-L-homocysteine. Catalyzes the methyl esterification of L-isoaspartyl residues in peptides and proteins that result from spontaneous decomposition of normal L-aspartyl and L-asparaginyl residues. It plays a role in the repair and/or degradation of damaged proteins. The polypeptide is Protein-L-isoaspartate O-methyltransferase (Aliivibrio salmonicida (strain LFI1238) (Vibrio salmonicida (strain LFI1238))).